A 161-amino-acid chain; its full sequence is RNA pyrophosphohydrolase (161 aa).

In terms of domain architecture, Nudix hydrolase spans 12-154 (PYRPGVGMMI…KRKLYQAVVK (143 aa)). A Nudix box motif is present at residues 46–67 (GGIVPGETPSIAAMREMLEEIG).

It belongs to the Nudix hydrolase family. RppH subfamily. A divalent metal cation serves as cofactor.

Functionally, accelerates the degradation of transcripts by removing pyrophosphate from the 5'-end of triphosphorylated RNA, leading to a more labile monophosphorylated state that can stimulate subsequent ribonuclease cleavage. The sequence is that of RNA pyrophosphohydrolase from Rickettsia africae (strain ESF-5).